The primary structure comprises 347 residues: NHL repeat-containing protein 3 (347 aa).

Positions 1-22 (MARAWVCLAGAAFFLSCLVLHS) are cleaved as a signal peptide. The stretch at 47 to 93 (RLDLGWPKNSEYFTGATFCVAVDSLNGLVYVAQRGDNIPKVLVFSED) is one NHL 1 repeat. The N-linked (GlcNAc...) asparagine glycan is linked to asparagine 101. NHL repeat units follow at residues 150–196 (TPGK…LSQD) and 200–243 (LWLR…FDKD). N-linked (GlcNAc...) asparagine glycosylation is found at asparagine 206 and asparagine 278. Residues 294–338 (GDCSVVSTIQLADQVLPHLLEVDRKTGAVYVAEIGAKQIQKYIPW) form an NHL 4 repeat.

In Mus musculus (Mouse), this protein is NHL repeat-containing protein 3 (Nhlrc3).